An 87-amino-acid chain; its full sequence is U3-theraphotoxin-Cg1c (87 aa).

An N-terminal signal peptide occupies residues 1–23; the sequence is MRTFTLIAILTCAVLVIFHVSAA. The propeptide occupies 24 to 51; the sequence is EELEAQDVIQPEDIFTGVATLEEDRIFE. 3 disulfide bridges follow: cysteine 52–cysteine 65, cysteine 56–cysteine 79, and cysteine 73–cysteine 84.

The protein belongs to the neurotoxin 12 (Hwtx-2) family. 03 (juruin) subfamily. In terms of tissue distribution, expressed by the venom gland.

It is found in the secreted. In terms of biological role, probable ion channel inhibitor. The chain is U3-theraphotoxin-Cg1c from Chilobrachys guangxiensis (Chinese earth tiger tarantula).